The primary structure comprises 425 residues: Synaptotagmin-4 (425 aa).

Over 1–16 the chain is Vesicular; the sequence is MAPITTSRVEFDEIPT. A helical transmembrane segment spans residues 17-37; that stretch reads VVGIFSAFGLVFTVSLFAWIC. Residues 38–425 lie on the Cytoplasmic side of the membrane; the sequence is CQRRSAKSNK…IAKWHMLCDG (388 aa). Residues 127–147 are disordered; sequence TETEKEANSPESLKSSTSLTS. S135 is modified (phosphoserine; by MAPK8). The segment covering 137–146 has biased composition (low complexity); sequence ESLKSSTSLT. C2 domains lie at 153-274 and 287-420; these read KLGT…MLMT and GRGE…AKWH. D246, S249, and D252 together coordinate Ca(2+).

The protein belongs to the synaptotagmin family. Interacts with KIF1A; the interaction increases in presence of calcium and decreases when SYT4 is phosphorylated at Ser-135. It depends on Ca(2+) as a cofactor. Post-translationally, phosphorylation at Ser-135 by MAPK8/JNK1 reduces interaction with KIF1A and neuronal dense core vesicles mobility. In terms of tissue distribution, expressed in many regions of the nervous system but is undetectable in extra neural tissues.

The protein localises to the cytoplasmic vesicle. Its subcellular location is the secretory vesicle. It localises to the neuronal dense core vesicle membrane. In terms of biological role, synaptotagmin family member which does not bind Ca(2+). Plays a role in dendrite formation by melanocytes. Synaptotagmin family member which does not bind Ca(2+). Involved in neuronal dense core vesicles (DCVs) mobility through its interaction with KIF1A. Upon increased neuronal activity, phosphorylation by MAPK8/JNK1 destabilizes the interaction with KIF1A and captures DCVs to synapses. Plays a role in dendrite formation by melanocytes. The sequence is that of Synaptotagmin-4 (Syt4) from Mus musculus (Mouse).